The primary structure comprises 394 residues: 1-deoxy-D-xylulose 5-phosphate reductoisomerase (394 aa).

Residues Thr10, Gly11, Ser12, Ile13, Gly38, Arg39, Asn40, and Asn123 each contribute to the NADPH site. Lys124 serves as a coordination point for 1-deoxy-D-xylulose 5-phosphate. Glu125 is a binding site for NADPH. A Mn(2+)-binding site is contributed by Asp149. Residues Ser150, Glu151, Ser175, and His198 each coordinate 1-deoxy-D-xylulose 5-phosphate. Glu151 contributes to the Mn(2+) binding site. Residue Gly204 coordinates NADPH. Residues Ser211, Asn216, Lys217, and Glu220 each contribute to the 1-deoxy-D-xylulose 5-phosphate site. Glu220 contacts Mn(2+).

The protein belongs to the DXR family. It depends on Mg(2+) as a cofactor. The cofactor is Mn(2+).

The catalysed reaction is 2-C-methyl-D-erythritol 4-phosphate + NADP(+) = 1-deoxy-D-xylulose 5-phosphate + NADPH + H(+). It participates in isoprenoid biosynthesis; isopentenyl diphosphate biosynthesis via DXP pathway; isopentenyl diphosphate from 1-deoxy-D-xylulose 5-phosphate: step 1/6. Functionally, catalyzes the NADPH-dependent rearrangement and reduction of 1-deoxy-D-xylulose-5-phosphate (DXP) to 2-C-methyl-D-erythritol 4-phosphate (MEP). The protein is 1-deoxy-D-xylulose 5-phosphate reductoisomerase of Cereibacter sphaeroides (strain ATCC 17025 / ATH 2.4.3) (Rhodobacter sphaeroides).